The sequence spans 384 residues: Intraflagellar transport protein 46 homolog (384 aa).

Disordered regions lie at residues 52 to 151 (VNAE…PADY) and 358 to 384 (SATD…LTLD). Over residues 87–99 (EKLEEDTKRKKEP) the composition is skewed to basic and acidic residues. Residues 110-138 (DEEEDEDDDDDDDDDDSDDTESDEEEEEP) show a composition bias toward acidic residues. Over residues 358 to 374 (SATDGQKSDTPPASRSA) the composition is skewed to polar residues.

Belongs to the IFT46 family.

Its subcellular location is the cytoplasm. It is found in the cytoskeleton. The protein localises to the cilium basal body. It localises to the cell projection. The protein resides in the cilium. Forms part of a complex involved in intraflagellar transport (IFT), the bi-directional movement of particles required for the assembly, maintenance and functioning of primary cilia. Plays a role in early embryonic development. The chain is Intraflagellar transport protein 46 homolog from Danio rerio (Zebrafish).